The primary structure comprises 320 residues: Phosphatidylserine decarboxylase proenzyme (320 aa).

Catalysis depends on charge relay system; for autoendoproteolytic cleavage activity residues Asp-90, His-147, and Ser-254. Ser-254 functions as the Schiff-base intermediate with substrate; via pyruvic acid; for decarboxylase activity in the catalytic mechanism. Residue Ser-254 is modified to Pyruvic acid (Ser); by autocatalysis. Positions 288 to 320 are disordered; that stretch reads EASTAAEPAPLPEEEIRAEHRASPLVDDTQDQG.

The protein belongs to the phosphatidylserine decarboxylase family. PSD-B subfamily. Prokaryotic type I sub-subfamily. Heterodimer of a large membrane-associated beta subunit and a small pyruvoyl-containing alpha subunit. The cofactor is pyruvate. Post-translationally, is synthesized initially as an inactive proenzyme. Formation of the active enzyme involves a self-maturation process in which the active site pyruvoyl group is generated from an internal serine residue via an autocatalytic post-translational modification. Two non-identical subunits are generated from the proenzyme in this reaction, and the pyruvate is formed at the N-terminus of the alpha chain, which is derived from the carboxyl end of the proenzyme. The autoendoproteolytic cleavage occurs by a canonical serine protease mechanism, in which the side chain hydroxyl group of the serine supplies its oxygen atom to form the C-terminus of the beta chain, while the remainder of the serine residue undergoes an oxidative deamination to produce ammonia and the pyruvoyl prosthetic group on the alpha chain. During this reaction, the Ser that is part of the protease active site of the proenzyme becomes the pyruvoyl prosthetic group, which constitutes an essential element of the active site of the mature decarboxylase.

Its subcellular location is the cell membrane. The catalysed reaction is a 1,2-diacyl-sn-glycero-3-phospho-L-serine + H(+) = a 1,2-diacyl-sn-glycero-3-phosphoethanolamine + CO2. Its pathway is phospholipid metabolism; phosphatidylethanolamine biosynthesis; phosphatidylethanolamine from CDP-diacylglycerol: step 2/2. Its function is as follows. Catalyzes the formation of phosphatidylethanolamine (PtdEtn) from phosphatidylserine (PtdSer). The protein is Phosphatidylserine decarboxylase proenzyme of Klebsiella pneumoniae (strain 342).